The chain runs to 122 residues: Large ribosomal subunit protein uL14c (122 aa).

This sequence belongs to the universal ribosomal protein uL14 family. In terms of assembly, part of the 50S ribosomal subunit.

The protein localises to the plastid. It is found in the chloroplast. In terms of biological role, binds to 23S rRNA. In Daucus carota (Wild carrot), this protein is Large ribosomal subunit protein uL14c.